Consider the following 523-residue polypeptide: Acetyl-coenzyme A carboxylase carboxyl transferase subunit beta, chloroplastic (523 aa).

The CoA carboxyltransferase N-terminal domain maps to 224-523; that stretch reads FWVICENCHK…FVPSNQNSIK (300 aa). Residues cysteine 228, cysteine 231, cysteine 247, and cysteine 250 each contribute to the Zn(2+) site. A C4-type zinc finger spans residues 228-250; the sequence is CENCHKFNYKRLFKSKMNICEEC.

It belongs to the AccD/PCCB family. In terms of assembly, acetyl-CoA carboxylase is a heterohexamer composed of biotin carboxyl carrier protein, biotin carboxylase and 2 subunits each of ACCase subunit alpha and ACCase plastid-coded subunit beta (accD). The cofactor is Zn(2+).

It is found in the plastid. The protein resides in the chloroplast stroma. The enzyme catalyses N(6)-carboxybiotinyl-L-lysyl-[protein] + acetyl-CoA = N(6)-biotinyl-L-lysyl-[protein] + malonyl-CoA. It participates in lipid metabolism; malonyl-CoA biosynthesis; malonyl-CoA from acetyl-CoA: step 1/1. Component of the acetyl coenzyme A carboxylase (ACC) complex. Biotin carboxylase (BC) catalyzes the carboxylation of biotin on its carrier protein (BCCP) and then the CO(2) group is transferred by the transcarboxylase to acetyl-CoA to form malonyl-CoA. The sequence is that of Acetyl-coenzyme A carboxylase carboxyl transferase subunit beta, chloroplastic from Cucumis sativus (Cucumber).